The following is a 547-amino-acid chain: ATP synthase subunit alpha (547 aa).

Residue 172-179 (GDRKTGKT) coordinates ATP.

It belongs to the ATPase alpha/beta chains family. In terms of assembly, F-type ATPases have 2 components, CF(1) - the catalytic core - and CF(0) - the membrane proton channel. CF(1) has five subunits: alpha(3), beta(3), gamma(1), delta(1), epsilon(1). CF(0) has three main subunits: a(1), b(2) and c(9-12). The alpha and beta chains form an alternating ring which encloses part of the gamma chain. CF(1) is attached to CF(0) by a central stalk formed by the gamma and epsilon chains, while a peripheral stalk is formed by the delta and b chains.

It localises to the cell membrane. The enzyme catalyses ATP + H2O + 4 H(+)(in) = ADP + phosphate + 5 H(+)(out). Its function is as follows. Produces ATP from ADP in the presence of a proton gradient across the membrane. The alpha chain is a regulatory subunit. The chain is ATP synthase subunit alpha from Rhodococcus opacus (strain B4).